The following is a 210-amino-acid chain: Isomeliandiol synthase ISM1 (210 aa).

Helical transmembrane passes span Phe17–Ile37, Leu50–Phe70, Ile107–Val127, Ile135–Ala155, and Tyr172–Trp192. Residues Gly46–Ala188 form the EXPERA domain.

It belongs to the EBP family.

The protein resides in the membrane. The catalysed reaction is 7,8-epoxymelianol = isomeliandiol. It participates in secondary metabolite biosynthesis; terpenoid biosynthesis. Functionally, isomerase involved in the biosynthesis of limonoids and quassinoids triterpene natural products such as ailanthone, chaparrinone, glaucarubinone and amarolide, allelopathic degraded triterpene lactones inhibiting the growth of other plants, and possessing antimalarial, antifeedant, insecticidal, anti-inflammatory and anticancer activities. Catalyzes the conversion of 7,8-epoxymelianol to isomeliandiol via skeletal rearrangements. The protein is Isomeliandiol synthase ISM1 of Ailanthus altissima (Tree-of-heaven).